Here is a 132-residue protein sequence, read N- to C-terminus: Small ribosomal subunit protein uS11 (132 aa).

The protein belongs to the universal ribosomal protein uS11 family. In terms of assembly, part of the 30S ribosomal subunit. Interacts with proteins S7 and S18. Binds to IF-3.

Its function is as follows. Located on the platform of the 30S subunit, it bridges several disparate RNA helices of the 16S rRNA. Forms part of the Shine-Dalgarno cleft in the 70S ribosome. This Legionella pneumophila (strain Paris) protein is Small ribosomal subunit protein uS11.